Here is a 197-residue protein sequence, read N- to C-terminus: MPTTPATATHSSSNGTAEAIMLELVDENGTTIGTAEKLAAHQAPGQLHRAFSVFLFDEQGRLLLQRRALGKYHSPGVWSNTCCGHPYPGEAPFAAAARRTHEELGLSPSLLAEAGTVRYNHPDPASGLVEQEFNHLFVGLAQTAPKPDPEEVGETAFVTAAELAERHAKAPFSAWFMTVLDAARPAIRELTGPSAGW.

Residues His41 and His48 each coordinate Mn(2+). A Nudix hydrolase domain is found at 46–183 (QLHRAFSVFL…AWFMTVLDAA (138 aa)). Residue Cys83 is part of the active site. His85 contacts Mn(2+). Glu103 lines the Mg(2+) pocket. Glu130 and Glu132 together coordinate Mn(2+). Glu132 is an active-site residue.

The protein belongs to the IPP isomerase type 1 family. The cofactor is Mg(2+). Mn(2+) is required as a cofactor.

The protein localises to the cytoplasm. It catalyses the reaction isopentenyl diphosphate = dimethylallyl diphosphate. The protein operates within isoprenoid biosynthesis; dimethylallyl diphosphate biosynthesis; dimethylallyl diphosphate from isopentenyl diphosphate: step 1/1. Catalyzes the 1,3-allylic rearrangement of the homoallylic substrate isopentenyl (IPP) to its highly electrophilic allylic isomer, dimethylallyl diphosphate (DMAPP). This Streptomyces griseus subsp. griseus (strain JCM 4626 / CBS 651.72 / NBRC 13350 / KCC S-0626 / ISP 5235) protein is Isopentenyl-diphosphate Delta-isomerase.